A 397-amino-acid polypeptide reads, in one-letter code: Tryptophan synthase beta chain (397 aa).

Position 87 is an N6-(pyridoxal phosphate)lysine (Lys-87).

This sequence belongs to the TrpB family. In terms of assembly, tetramer of two alpha and two beta chains. The cofactor is pyridoxal 5'-phosphate.

The enzyme catalyses (1S,2R)-1-C-(indol-3-yl)glycerol 3-phosphate + L-serine = D-glyceraldehyde 3-phosphate + L-tryptophan + H2O. It participates in amino-acid biosynthesis; L-tryptophan biosynthesis; L-tryptophan from chorismate: step 5/5. Functionally, the beta subunit is responsible for the synthesis of L-tryptophan from indole and L-serine. The protein is Tryptophan synthase beta chain of Citrobacter koseri (strain ATCC BAA-895 / CDC 4225-83 / SGSC4696).